A 150-amino-acid polypeptide reads, in one-letter code: UPF0756 membrane protein HAPS_1649 (150 aa).

The next 5 helical transmembrane spans lie at 1–21 (MSLQFNSVALLLVALILLGIF), 27–46 (VTISAAVLLIMQQTLLSKYV), 52–72 (YGIKIGIIILTIGVLAPLVSG), 82–102 (LINWKMIVAIIAGIVVAWLGG), and 123–143 (IIGVAFLKGVPVGPLIAAGIL).

It belongs to the UPF0756 family.

Its subcellular location is the cell membrane. In Glaesserella parasuis serovar 5 (strain SH0165) (Haemophilus parasuis), this protein is UPF0756 membrane protein HAPS_1649.